The primary structure comprises 406 residues: Argininosuccinate synthase (406 aa).

Residues Ala13 to Ser21 and Ala40 each bind ATP. Residues Tyr91 and Ser96 each contribute to the L-citrulline site. ATP is bound at residue Gly121. The L-aspartate site is built by Thr123, Asn127, and Asp128. Asn127 serves as a coordination point for L-citrulline. Residues Arg131, Ser182, Ser191, Glu267, and Tyr279 each contribute to the L-citrulline site.

It belongs to the argininosuccinate synthase family. Type 1 subfamily. As to quaternary structure, homotetramer.

The protein localises to the cytoplasm. The catalysed reaction is L-citrulline + L-aspartate + ATP = 2-(N(omega)-L-arginino)succinate + AMP + diphosphate + H(+). It participates in amino-acid biosynthesis; L-arginine biosynthesis; L-arginine from L-ornithine and carbamoyl phosphate: step 2/3. This is Argininosuccinate synthase from Brucella abortus (strain S19).